The following is a 336-amino-acid chain: Holliday junction branch migration complex subunit RuvB (336 aa).

Positions 1 to 182 are large ATPase domain (RuvB-L); sequence MKERIVNLET…FGMSFRMQFY (182 aa). Residues leucine 21, arginine 22, glycine 63, lysine 66, threonine 67, serine 68, 129–131, arginine 172, tyrosine 182, and arginine 219 contribute to the ATP site; that span reads EDF. A Mg(2+)-binding site is contributed by threonine 67. Residues 183 to 253 are small ATPAse domain (RuvB-S); the sequence is SPSELALIIK…ITLHALNELG (71 aa). A head domain (RuvB-H) region spans residues 256-336; that stretch reads ELGFDEADLA…IPTLKSQTLF (81 aa). Arginine 310 and arginine 315 together coordinate DNA.

Belongs to the RuvB family. In terms of assembly, homohexamer. Forms an RuvA(8)-RuvB(12)-Holliday junction (HJ) complex. HJ DNA is sandwiched between 2 RuvA tetramers; dsDNA enters through RuvA and exits via RuvB. An RuvB hexamer assembles on each DNA strand where it exits the tetramer. Each RuvB hexamer is contacted by two RuvA subunits (via domain III) on 2 adjacent RuvB subunits; this complex drives branch migration. In the full resolvosome a probable DNA-RuvA(4)-RuvB(12)-RuvC(2) complex forms which resolves the HJ.

Its subcellular location is the cytoplasm. The enzyme catalyses ATP + H2O = ADP + phosphate + H(+). Functionally, the RuvA-RuvB-RuvC complex processes Holliday junction (HJ) DNA during genetic recombination and DNA repair, while the RuvA-RuvB complex plays an important role in the rescue of blocked DNA replication forks via replication fork reversal (RFR). RuvA specifically binds to HJ cruciform DNA, conferring on it an open structure. The RuvB hexamer acts as an ATP-dependent pump, pulling dsDNA into and through the RuvAB complex. RuvB forms 2 homohexamers on either side of HJ DNA bound by 1 or 2 RuvA tetramers; 4 subunits per hexamer contact DNA at a time. Coordinated motions by a converter formed by DNA-disengaged RuvB subunits stimulates ATP hydrolysis and nucleotide exchange. Immobilization of the converter enables RuvB to convert the ATP-contained energy into a lever motion, pulling 2 nucleotides of DNA out of the RuvA tetramer per ATP hydrolyzed, thus driving DNA branch migration. The RuvB motors rotate together with the DNA substrate, which together with the progressing nucleotide cycle form the mechanistic basis for DNA recombination by continuous HJ branch migration. Branch migration allows RuvC to scan DNA until it finds its consensus sequence, where it cleaves and resolves cruciform DNA. The polypeptide is Holliday junction branch migration complex subunit RuvB (Helicobacter pylori (strain HPAG1)).